Here is a 222-residue protein sequence, read N- to C-terminus: Recombination protein RecR (222 aa).

Residues 57–72 (CPVCFNITDAERCDVC) form a C4-type zinc finger. A Toprim domain is found at 80–173 (SVICVVEEPG…VVSRIAYGLP (94 aa)). Positions 189 to 222 (ALSGRRRVSEPASPPPPRRNDEEQDGAPARPPSH) are disordered.

Belongs to the RecR family.

Its function is as follows. May play a role in DNA repair. It seems to be involved in an RecBC-independent recombinational process of DNA repair. It may act with RecF and RecO. This Deinococcus geothermalis (strain DSM 11300 / CIP 105573 / AG-3a) protein is Recombination protein RecR.